Consider the following 64-residue polypeptide: GRDAYIADSENCTYTCALNPYCNDLCTKNGAKSGYCQWAGRYGNACWCIDLPDKVPIRISGSCR.

In terms of domain architecture, LCN-type CS-alpha/beta spans 2-64; the sequence is RDAYIADSEN…VPIRISGSCR (63 aa). Intrachain disulfides connect C12/C63, C16/C36, C22/C46, and C26/C48.

In terms of tissue distribution, expressed by the venom gland.

Its subcellular location is the secreted. In terms of biological role, this protein markedly relaxes the rat carbachol-precontracted anococcygeus muscle. This relaxation is inhibited by the inhibitor of nitric oxide (NO) synthase, N-nitro-L-arginine methyl ester (L-NAME), suggesting that the response induced by this protein is NO-mediated. The sequence is that of Makatoxin-1 from Olivierus martensii (Manchurian scorpion).